Here is a 190-residue protein sequence, read N- to C-terminus: Hypoxanthine/guanine phosphoribosyltransferase (190 aa).

The protein belongs to the purine/pyrimidine phosphoribosyltransferase family. Archaeal HPRT subfamily. In terms of assembly, homodimer.

The protein localises to the cytoplasm. The catalysed reaction is IMP + diphosphate = hypoxanthine + 5-phospho-alpha-D-ribose 1-diphosphate. It carries out the reaction GMP + diphosphate = guanine + 5-phospho-alpha-D-ribose 1-diphosphate. It participates in purine metabolism; IMP biosynthesis via salvage pathway; IMP from hypoxanthine: step 1/1. Its function is as follows. Catalyzes a salvage reaction resulting in the formation of IMP that is energically less costly than de novo synthesis. In Methanohalobium evestigatum (strain ATCC BAA-1072 / DSM 3721 / NBRC 107634 / OCM 161 / Z-7303), this protein is Hypoxanthine/guanine phosphoribosyltransferase.